Consider the following 313-residue polypeptide: Cytochrome c biogenesis protein CcsA (313 aa).

8 helical membrane passes run 9-29, 44-64, 71-91, 111-131, 143-163, 217-237, 244-264, and 278-298; these read ILTH…LITF, GIIV…VSSG, LYES…IPYF, GFAT…VPAL, MILG…LLVI, VISL…VWAN, WNWD…AIYL, and AIVA…VNLL.

Belongs to the CcmF/CycK/Ccl1/NrfE/CcsA family. May interact with Ccs1.

The protein localises to the plastid. It localises to the chloroplast thylakoid membrane. Required during biogenesis of c-type cytochromes (cytochrome c6 and cytochrome f) at the step of heme attachment. The chain is Cytochrome c biogenesis protein CcsA from Solanum lycopersicum (Tomato).